A 105-amino-acid polypeptide reads, in one-letter code: Small ribosomal subunit protein uS17 (105 aa).

It belongs to the universal ribosomal protein uS17 family. Part of the 30S ribosomal subunit.

Functionally, one of the primary rRNA binding proteins, it binds specifically to the 5'-end of 16S ribosomal RNA. The chain is Small ribosomal subunit protein uS17 from Thermus thermophilus (strain ATCC BAA-163 / DSM 7039 / HB27).